The sequence spans 217 residues: Protein LURP-one-related 15 (217 aa).

At M1 the chain carries N-acetylmethionine.

Belongs to the LOR family.

Functionally, might be related to the phospholipid scramblase and tubby-like superfamily of membrane tethered transcription factors. The chain is Protein LURP-one-related 15 from Arabidopsis thaliana (Mouse-ear cress).